A 448-amino-acid polypeptide reads, in one-letter code: Glutamate--tRNA ligase 1 (448 aa).

Residues 10–20 carry the 'HIGH' region motif; it reads PSPTGMLHVGN. Positions 240–244 match the 'KMSKS' region motif; sequence KISKR. Lysine 243 serves as a coordination point for ATP.

Belongs to the class-I aminoacyl-tRNA synthetase family. Glutamate--tRNA ligase type 1 subfamily. As to quaternary structure, monomer.

The protein localises to the cytoplasm. The catalysed reaction is tRNA(Glu) + L-glutamate + ATP = L-glutamyl-tRNA(Glu) + AMP + diphosphate. Its function is as follows. Catalyzes the attachment of glutamate to tRNA(Glu) in a two-step reaction: glutamate is first activated by ATP to form Glu-AMP and then transferred to the acceptor end of tRNA(Glu). This is Glutamate--tRNA ligase 1 from Rickettsia typhi (strain ATCC VR-144 / Wilmington).